The chain runs to 427 residues: Pectin acetylesterase 5 (427 aa).

The first 35 residues, 1–35 (MAIPRFSSLLRCRKWAKSDWLVASIGCVLIVFFLS), serve as a signal peptide directing secretion. An N-linked (GlcNAc...) asparagine glycan is attached at Asn-173. Residues Ser-209, Asp-305, and His-372 each act as charge relay system in the active site. An N-linked (GlcNAc...) asparagine glycan is attached at Asn-391.

The protein belongs to the pectinacetylesterase family.

It localises to the secreted. It is found in the cell wall. Hydrolyzes acetyl esters in homogalacturonan regions of pectin. In type I primary cell wall, galacturonic acid residues of pectin can be acetylated at the O-2 and O-3 positions. Decreasing the degree of acetylation of pectin gels in vitro alters their physical properties. The protein is Pectin acetylesterase 5 of Arabidopsis thaliana (Mouse-ear cress).